A 616-amino-acid polypeptide reads, in one-letter code: Chaperone protein HtpG (616 aa).

The tract at residues 1–333 is a; substrate-binding; it reads MKKQFDTEVN…CQDLPLNVSR (333 aa). The interval 334–542 is b; the sequence is EILQQNKILS…SNDPTYQMQK (209 aa). Residues 543-616 form a c region; it reads IMLSMGQEVK…INEFLEKELL (74 aa).

The protein belongs to the heat shock protein 90 family. In terms of assembly, homodimer.

The protein resides in the cytoplasm. Molecular chaperone. Has ATPase activity. This is Chaperone protein HtpG from Borrelia garinii subsp. bavariensis (strain ATCC BAA-2496 / DSM 23469 / PBi) (Borreliella bavariensis).